The chain runs to 506 residues: Putative amidase (506 aa).

Catalysis depends on charge relay system residues Lys-121 and Ser-196. The active-site Acyl-ester intermediate is the Ser-220.

The protein belongs to the amidase family.

The enzyme catalyses a monocarboxylic acid amide + H2O = a monocarboxylate + NH4(+). In Synechocystis sp. (strain ATCC 27184 / PCC 6803 / Kazusa), this protein is Putative amidase.